Here is a 462-residue protein sequence, read N- to C-terminus: ATP synthase subunit beta (462 aa).

Residue 151–158 (GGAGVGKT) participates in ATP binding.

It belongs to the ATPase alpha/beta chains family. In terms of assembly, F-type ATPases have 2 components, CF(1) - the catalytic core - and CF(0) - the membrane proton channel. CF(1) has five subunits: alpha(3), beta(3), gamma(1), delta(1), epsilon(1). CF(0) has four main subunits: a(1), b(1), b'(1) and c(9-12).

The protein localises to the cell inner membrane. The enzyme catalyses ATP + H2O + 4 H(+)(in) = ADP + phosphate + 5 H(+)(out). Functionally, produces ATP from ADP in the presence of a proton gradient across the membrane. The catalytic sites are hosted primarily by the beta subunits. The sequence is that of ATP synthase subunit beta from Chlorobium phaeovibrioides (strain DSM 265 / 1930) (Prosthecochloris vibrioformis (strain DSM 265)).